The sequence spans 262 residues: MEEAILVPCVLGLLLLPILAMLMALCVHCHRLPGSYDSTSSDSLYPRGIQFKRPHTVAPWPPAYPPVTSYPPLSQPDLLPIPRSPQPLGGSHRTPSSRRDSDGANSVASYENEGASGIRGAQAGWGVWGPSWTRLTPVSLPPEPACEDADEDEDDYHNPGYLVVLPDSTPATSTAAPSAPALSTPGIRDSAFSMESIDDYVNVPESGESAEASLDGSREYVNVSQELHPGAAKTEPAALSSQEAEEVEEEGAPDYENLQELN.

Residues 1 to 4 are Extracellular-facing; that stretch reads MEEA. The helical; Signal-anchor for type III membrane protein transmembrane segment at 5–27 threads the bilayer; it reads ILVPCVLGLLLLPILAMLMALCV. Residues C26 and C29 are each lipidated (S-palmitoyl cysteine). Residues 28–262 are Cytoplasmic-facing; the sequence is HCHRLPGSYD…PDYENLQELN (235 aa). At T39 the chain carries Phosphothreonine. 7 positions are modified to phosphoserine: S40, S41, S43, S84, S101, S106, and S109. The disordered stretch occupies residues 69–115; it reads SYPPLSQPDLLPIPRSPQPLGGSHRTPSSRRDSDGANSVASYENEGA. Phosphotyrosine is present on residues Y110, Y156, Y161, Y200, and Y220. Positions 161–164 are interaction with PLCG1; that stretch reads YLVV. Interaction with GRB2, GRAP2 and PIK3R1 stretches follow at residues 200–203 and 220–223; these read YVNV. Residues 206 to 262 form a disordered region; that stretch reads SGESAEASLDGSREYVNVSQELHPGAAKTEPAALSSQEAEEVEEEGAPDYENLQELN. S224, S240, and S241 each carry phosphoserine. Over residues 243–253 the composition is skewed to acidic residues; the sequence is EAEEVEEEGAP. Residue Y255 is modified to Phosphotyrosine.

In terms of assembly, when phosphorylated, interacts directly with the PIK3R1 subunit of phosphoinositide 3-kinase and the SH2 domains of GRB2, GRAP, GRAP2, PLCG1 and PLCG2. Interacts indirectly with CBL, SOS, VAV, and LCP2. Interacts with SHB, SKAP2 and CLNK. Interacts with FCGR1A. Interacts with GRB2, PLCG1 and THEMIS upon TCR activation in thymocytes. Interacts with THEMIS2. (Microbial infection) Interacts with herpes virus 1/HHV-1 protein US3; this interaction prevents the interaction between LAT and TRAF6. Post-translationally, phosphorylated on tyrosines by ZAP70 upon TCR activation, or by SYK upon other immunoreceptor activation; which leads to the recruitment of multiple signaling molecules. Is one of the most prominently tyrosine-phosphorylated proteins detected following TCR engagement. May be dephosphorylated by PTPRJ. Phosphorylated by ITK leading to the recruitment of VAV1 to LAT-containing complexes. In terms of processing, palmitoylation of Cys-26 and Cys-29 is required for raft targeting and efficient phosphorylation. 'Lys-63'-linked ubiquitinated by TRAF6. Expressed in thymus, T-cells, NK cells, mast cells and, at lower levels, in spleen. Present in T-cells but not B-cells (at protein level).

Its subcellular location is the cell membrane. Required for TCR (T-cell antigen receptor)- and pre-TCR-mediated signaling, both in mature T-cells and during their development. Involved in FCGR3 (low affinity immunoglobulin gamma Fc region receptor III)-mediated signaling in natural killer cells and FCER1 (high affinity immunoglobulin epsilon receptor)-mediated signaling in mast cells. Couples activation of these receptors and their associated kinases with distal intracellular events such as mobilization of intracellular calcium stores, PKC activation, MAPK activation or cytoskeletal reorganization through the recruitment of PLCG1, GRB2, GRAP2, and other signaling molecules. In Homo sapiens (Human), this protein is Linker for activation of T-cells family member 1 (LAT).